The primary structure comprises 29 residues: Cyclotide mang-A (29 aa).

A cross-link (cyclopeptide (Gly-Asp)) is located at residues 1 to 29; sequence GFPTCGETCTLGTCNTPGCTCSWPICTRD. 3 cysteine pairs are disulfide-bonded: Cys-5–Cys-19, Cys-9–Cys-21, and Cys-14–Cys-26.

This sequence belongs to the cyclotide family. Moebius subfamily. In terms of processing, this is a cyclic peptide.

In terms of biological role, probably participates in a plant defense mechanism. The polypeptide is Cyclotide mang-A (Melicytus angustifolius (Hymenanthera angustifolia)).